We begin with the raw amino-acid sequence, 288 residues long: Probable pectinesterase 56 (288 aa).

The signal sequence occupies residues 1–27 (MAMTSTMQLLVLSFLVIASLFLGATVA). 2 N-linked (GlcNAc...) asparagine glycosylation sites follow: N55 and N95. 2 residues coordinate substrate: T120 and Q150. Catalysis depends on D173, which acts as the Proton donor. Residue D194 is the Nucleophile of the active site. N242 is a glycosylation site (N-linked (GlcNAc...) asparagine). R262 and W264 together coordinate substrate.

The protein belongs to the pectinesterase family.

It localises to the secreted. Its subcellular location is the cell wall. The enzyme catalyses [(1-&gt;4)-alpha-D-galacturonosyl methyl ester](n) + n H2O = [(1-&gt;4)-alpha-D-galacturonosyl](n) + n methanol + n H(+). Its pathway is glycan metabolism; pectin degradation; 2-dehydro-3-deoxy-D-gluconate from pectin: step 1/5. Its function is as follows. Acts in the modification of cell walls via demethylesterification of cell wall pectin. The chain is Probable pectinesterase 56 (PME56) from Arabidopsis thaliana (Mouse-ear cress).